The primary structure comprises 443 residues: ATP-dependent protease ATPase subunit HslU (443 aa).

Residues Ile-18, 60–65 (GVGKTE), Asp-256, Glu-321, and Arg-393 contribute to the ATP site.

It belongs to the ClpX chaperone family. HslU subfamily. As to quaternary structure, a double ring-shaped homohexamer of HslV is capped on each side by a ring-shaped HslU homohexamer. The assembly of the HslU/HslV complex is dependent on binding of ATP.

It localises to the cytoplasm. In terms of biological role, ATPase subunit of a proteasome-like degradation complex; this subunit has chaperone activity. The binding of ATP and its subsequent hydrolysis by HslU are essential for unfolding of protein substrates subsequently hydrolyzed by HslV. HslU recognizes the N-terminal part of its protein substrates and unfolds these before they are guided to HslV for hydrolysis. The chain is ATP-dependent protease ATPase subunit HslU from Nitrosospira multiformis (strain ATCC 25196 / NCIMB 11849 / C 71).